Consider the following 297-residue polypeptide: Calponin-1 (297 aa).

One can recognise a Calponin-homology (CH) domain in the interval 28–131 (HQREQELREW…STLLALASMA (104 aa)). 3 Calponin-like repeats span residues 164 to 189 (IGLQMGTNKFASQQGMTAYGTRRHLY), 204 to 229 (ISLQMGTNKGASQAGMTAPGTKRQIF), and 243 to 268 (VSLQMGSNKGASQRGMTVYGLPRQVY). Residue T170 is modified to Phosphothreonine; by ROCK2. S175 bears the Phosphoserine; by ROCK2 mark. Phosphothreonine; by ROCK2 occurs at positions 180 and 184. The residue at position 259 (T259) is a Phosphothreonine; by ROCK2.

Belongs to the calponin family. Part of cGMP kinase signaling complex at least composed of ACTA2/alpha-actin, CNN1/calponin H1, PLN/phospholamban, PRKG1 and ITPR1. In terms of tissue distribution, smooth muscle, and tissues containing significant amounts of smooth muscle.

Thin filament-associated protein that is implicated in the regulation and modulation of smooth muscle contraction. It is capable of binding to actin, calmodulin and tropomyosin. The interaction of calponin with actin inhibits the actomyosin Mg-ATPase activity. The protein is Calponin-1 (Cnn1) of Mus musculus (Mouse).